Reading from the N-terminus, the 105-residue chain is Nucleoid-associated protein Sca_0120 (105 aa).

Residues 1–36 (MRGGGNMQQMMKQMQKMQKKMAEEQEKLKDEKVEGS) form a disordered region. Over residues 7–16 (MQQMMKQMQK) the composition is skewed to low complexity. Residues 20-34 (KMAEEQEKLKDEKVE) show a composition bias toward basic and acidic residues.

The protein belongs to the YbaB/EbfC family. Homodimer.

The protein localises to the cytoplasm. The protein resides in the nucleoid. In terms of biological role, binds to DNA and alters its conformation. May be involved in regulation of gene expression, nucleoid organization and DNA protection. This is Nucleoid-associated protein Sca_0120 from Staphylococcus carnosus (strain TM300).